We begin with the raw amino-acid sequence, 325 residues long: MSPKNLLKGFKRPKKIEFTTDVNTPNYGKFVAEPFERGIGTTIGNSLRRTLMSSIEGAAISAIRIEGVSHEFSYIEGVAEDVTRIILNLKQVRIKYEPEDKEASKVIHLELKGAGYFRAADLAVDSSIEIMNPDLHIATLNEDANLIMDLEIQRGRGYVPAEDKKKDIEVLGTIPIDSIFSPIQKVLFEVSETRVAQRSDYEKLTMEVWTDGSVSPEDAVAQAAKILKDHLTVFINFEEEIEEEEEELDEADEKLKAALSKHVEELELSVRSTNVLRSLEIDFIGELVKRSEDEMTKSKHFSEQSLLELKAKLSSMGLSFGMRDF.

The interval 1–238 is alpha N-terminal domain (alpha-NTD); that stretch reads MSPKNLLKGF…DHLTVFINFE (238 aa). The interval 255–325 is alpha C-terminal domain (alpha-CTD); sequence LKAALSKHVE…MGLSFGMRDF (71 aa).

The protein belongs to the RNA polymerase alpha chain family. In terms of assembly, homodimer. The RNAP catalytic core consists of 2 alpha, 1 beta, 1 beta' and 1 omega subunit. When a sigma factor is associated with the core the holoenzyme is formed, which can initiate transcription.

The enzyme catalyses RNA(n) + a ribonucleoside 5'-triphosphate = RNA(n+1) + diphosphate. Its function is as follows. DNA-dependent RNA polymerase catalyzes the transcription of DNA into RNA using the four ribonucleoside triphosphates as substrates. This is DNA-directed RNA polymerase subunit alpha from Leptospira biflexa serovar Patoc (strain Patoc 1 / Ames).